Reading from the N-terminus, the 147-residue chain is Transthyretin (147 aa).

Positions 1–20 (MASHRLLLLCLAGLVFVSEA) are cleaved as a signal peptide. At Cys-30 the chain carries Sulfocysteine. Residue Lys-35 participates in L-thyroxine binding. Glu-62 carries the post-translational modification 4-carboxyglutamate; in a patient with Moyamoya disease. Ser-72 is modified (phosphoserine). Glu-74 contributes to the L-thyroxine binding site. A glycan (N-linked (GlcNAc...) asparagine) is linked at Asn-118. An L-thyroxine-binding site is contributed by Ser-137.

It belongs to the transthyretin family. In terms of assembly, homotetramer. Dimer of dimers. In the homotetramer, subunits assemble around a central channel that can accommodate two ligand molecules. Interacts with RBP4. Not glycosylated under normal conditions. Following unfolding, caused for example by variant AMYLD1 'Gly-38', the cryptic Asn-118 site is exposed and glycosylated by STT3B-containing OST complex, leading to its degradation by the ER-associated degradation (ERAD) pathway. Post-translationally, sulfonation of the reactive cysteine Cys-30 enhances the stability of the native conformation of TTR, avoiding misassembly of the protein leading to amyloid formation. As to expression, detected in serum and cerebrospinal fluid (at protein level). Highly expressed in choroid plexus epithelial cells. Detected in retina pigment epithelium and liver.

The protein localises to the secreted. Its subcellular location is the cytoplasm. Functionally, thyroid hormone-binding protein. Probably transports thyroxine from the bloodstream to the brain. This chain is Transthyretin (TTR), found in Homo sapiens (Human).